The sequence spans 132 residues: Small ribosomal subunit protein uS8 (132 aa).

This sequence belongs to the universal ribosomal protein uS8 family. Part of the 30S ribosomal subunit. Contacts proteins S5 and S12.

In terms of biological role, one of the primary rRNA binding proteins, it binds directly to 16S rRNA central domain where it helps coordinate assembly of the platform of the 30S subunit. The sequence is that of Small ribosomal subunit protein uS8 from Listeria innocua serovar 6a (strain ATCC BAA-680 / CLIP 11262).